Consider the following 278-residue polypeptide: 3-methyl-2-oxobutanoate hydroxymethyltransferase (278 aa).

Mg(2+) contacts are provided by Asp-43 and Asp-82. 3-methyl-2-oxobutanoate is bound by residues 43 to 44, Asp-82, and Lys-112; that span reads DS. Glu-114 is a binding site for Mg(2+). Residue Glu-181 is the Proton acceptor of the active site.

Belongs to the PanB family. As to quaternary structure, homodecamer; pentamer of dimers. Mg(2+) serves as cofactor.

It is found in the cytoplasm. The catalysed reaction is 3-methyl-2-oxobutanoate + (6R)-5,10-methylene-5,6,7,8-tetrahydrofolate + H2O = 2-dehydropantoate + (6S)-5,6,7,8-tetrahydrofolate. It participates in cofactor biosynthesis; (R)-pantothenate biosynthesis; (R)-pantoate from 3-methyl-2-oxobutanoate: step 1/2. In terms of biological role, catalyzes the reversible reaction in which hydroxymethyl group from 5,10-methylenetetrahydrofolate is transferred onto alpha-ketoisovalerate to form ketopantoate. The protein is 3-methyl-2-oxobutanoate hydroxymethyltransferase of Bacillus cereus (strain ATCC 10987 / NRS 248).